A 602-amino-acid chain; its full sequence is Elongation factor 4 (602 aa).

The tr-type G domain maps to 7–189; that stretch reads SQIRNFSIIA…AIVHRIPPPA (183 aa). Residues 19-24 and 136-139 each bind GTP; these read DHGKST and NKID.

Belongs to the TRAFAC class translation factor GTPase superfamily. Classic translation factor GTPase family. LepA subfamily.

The protein localises to the cell inner membrane. The catalysed reaction is GTP + H2O = GDP + phosphate + H(+). In terms of biological role, required for accurate and efficient protein synthesis under certain stress conditions. May act as a fidelity factor of the translation reaction, by catalyzing a one-codon backward translocation of tRNAs on improperly translocated ribosomes. Back-translocation proceeds from a post-translocation (POST) complex to a pre-translocation (PRE) complex, thus giving elongation factor G a second chance to translocate the tRNAs correctly. Binds to ribosomes in a GTP-dependent manner. This is Elongation factor 4 from Gloeobacter violaceus (strain ATCC 29082 / PCC 7421).